Reading from the N-terminus, the 320-residue chain is MKSAEYLNTFRLRNLGLPVMNNLHDMSKATRISVETLRLLIYTADFRYRIYTVEKKGPEKRMRTIYQPSRELKALQGWVLRNILDKLSSSPFSIGFEKHQSILNNATPHIGANFILNIDLEDFFPSLTANKVFGVFHSLGYNRLISSVLTKICCYKNLLPQGAPSSPKLANLICSKLDYRIQGYAGSRGLIYTRYADDLTLSAQSMKKVVKARDFLFSIIPSEGLVINSKKTCISGPRSQRKVTGLVISQEKVGIGREKYKEIRAKIHHIFCGKSSEIEHVRGWLSFILSVDSKSHRRLITYISKLEKKYGKNPLNKAKT.

The region spanning 34–248 (VETLRLLIYT…SQRKVTGLVI (215 aa)) is the Reverse transcriptase domain. Mg(2+)-binding residues include D119, D197, and D198. The necessary and required for recognition and binding of RNA stretch occupies residues 230 to 320 (KKTCISGPRS…GKNPLNKAKT (91 aa)).

This sequence belongs to the bacterial reverse transcriptase family.

The enzyme catalyses DNA(n) + a 2'-deoxyribonucleoside 5'-triphosphate = DNA(n+1) + diphosphate. In terms of biological role, reverse transcriptase (RT) component of antiviral defense system retron Ec86, composed of a non-coding RNA (ncRNA), a ribosyltransferase/DNA-binding protein and this RT. Expression of the 3-gene retron confers protection against bacteriophage T5. At multiplicity of infection (MOI) of 0.02 cultures grow normally when infected with T5 without collapsing, at MOI 2 cultures enter growth stasis. Responsible for synthesis of msDNA (a branched molecule with RNA linked by a 2',5'-phosphodiester bond to ssDNA). The retron transcript serves as primer (from a conserved internal G residue) and template for the reaction, and codes for the RT. Recognizes only its cognate RNA as a primer template. Overexpression of the ncRNA and RT (without the ribosyltransferase), which leads to increased levels of msDNA, is mutagenic in vivo. This may be due to a mismatch in the msDNA stem which binds and sequesters MutS and/or MutL. The protein is Retron Ec86 reverse transcriptase of Escherichia coli.